Consider the following 1608-residue polypeptide: MSARRQELQDRAIVKIAAHLPDLIVYGDFSPERPSVKCFDGVLMFVDISGFTAMTEKFSTAMYMDRGAEQLVEILNYYISAIVEKVLIFGGDILKFAGDALLALWKVERKQLKNIITVVIKCSLEIHGLFEAKEVEEGLDIRVKIGLAAGHITMLVFGDETRNYFLVIGQAVDDVRLAQNMAQMNDVILSPNCWQLCDRSMIEIERIPDQRAVKVSFLKPPPTFNFDEFFAKCMAFMDYYPSGDHKNFLRLACMLESDPELELSLQKYVMEIILKQIDDKQLRGYLSELRPVTIVFVNLMFKEQDKAEVIGSAIQAACVHITSVLKVFRGQINKVFMFDKGCSFLCVFGFPGEKAPDEITHALESAVDIFDFCSQVHKIRTVSIGVASGIVFCGIVGHTVRHEYTVIGQKVNIAARMMMYYPGIVTCDSVTYDGSNLPAYFFKELPKKVMKGVADPGPVYQCLGLNEKVMFGMAYLICNRYEGYPLLGRVREIDYFMSTMKDFLMTNCSRVLMYEGLPGYGKSQVLMEIEYLASQHENHRAVAIALTKISFHQNFYTIQILMANVLGLDTCKHYKERQTNLQNRVKTLLDDKYHCLLNDIFHVQFPVSREMSRMSKIRKQKQLEALFMKILEQTVREERIIFIIDEAQFVDVASWAFIEKLIRSMPIFIVMSLCPFPETPCAAANAIMKNRNTTYITLGTMQPQEIRDKVCVDLSVSSIPRELDSYLVEGSCGIPYYCEELLKNLDHHRILIFQQAEAEEKTNVTWNNLFKYSVKPTEDMYLYTSIAAGQKEACYLTSGVRLKNLSPPASLKEISLVQLDSMSLSHQMLVRCAAIIGLTFTTELLFEILPCWNMKMMIKALATLVESNVFDCFRSSKDLQLALKQNVTTFEVHYRSLSLKSKEGLAYSEEEQLREMEGEVIECRILRFCRPIMQKTAYELWLKDQKKVLHLKCARFLEESAHRCNHCRNRDFIPYHHFIADIRLNTLDMDTVKKMVKSHGFKTEDEVIFSKSEIPRKFKFPENISITETREKILHFFDNVIIKMRTSQDDVIPLESCHCEELLQIVILPLAQHFVALEENNKALYYFLELASAYLILGDNYNAYMYLGEGERLLKSLTNEDSWSQTFEYATFYSLKGEICFNMGQMVLAKKMLRKALKLLNRMFPCNLLSLTFQMHIEKNRLSHFMNQHTQEGSLPGKKLAQLFLQSSCFSLLWKIYSLNFFFHYKYYGRLAAIMQMNTSLETQNNFQIIKAFLDFSLYRHLAGYEGVWFKYEILVMEQLLNLPLKGEAFEIMAYAADALGHIKFLTGHLDLAIELGSRAHKMWSLLRNPNKYHMVLCRLSKPLFLKSRYKHLVQVLGWLWDLSVTEEHIFSKAFFYFVCLDIMLYSGFIYRTFEECLEFIHHNEDNRILKFQSGLLLGLYSCIAVWYARLQEWDNFYKFSNRAKTLVTRRTPTVLYYEGISRYMEGQVLHLQKQIEEQAENAQDSGVELLKALETLVAQNTTGPVFYPRLYHLMAYVCILMGDGHSCDFFLNTALELSETQGNLLEKCWLSMSKEWWYSAPELTGDQWLQTVLSLPSWDKIVSGNVTLQDVQKNKFLMRVNILDNPF.

Guanylate cyclase domains follow at residues 42–179 (VLMF…RLAQ) and 293–418 (TIVF…ARMM). Mg(2+)-binding residues include D47 and I48. 47–52 (DISGFT) contacts ATP. Residue K95 coordinates hydrogencarbonate. D99 contacts Mg(2+). Residues D99 and K144 each contribute to the ATP site. Positions 167, 176, and 337 each coordinate hydrogencarbonate. ATP is bound by residues V406 and 412–416 (NIAAR).

This sequence belongs to the adenylyl cyclase class-4/guanylyl cyclase family. Requires Mg(2+) as cofactor. It depends on Mn(2+) as a cofactor. Cleavage may occur to generate the active 48 kDa form. As to expression, detected in testis (at protein level). Preferentially expressed in testis.

Its subcellular location is the cell membrane. It is found in the cytoplasm. It localises to the cytoskeleton. The protein localises to the perinuclear region. The protein resides in the nucleus. Its subcellular location is the cell projection. It is found in the cilium. It localises to the mitochondrion. It catalyses the reaction ATP = 3',5'-cyclic AMP + diphosphate. Activated by manganese or magnesium ions. In the presence of magnesium ions, the enzyme is activated by bicarbonate. Calcium mildly increases the enzyme activity, also in the presence of magnesium ions. Its function is as follows. Catalyzes the formation of the signaling molecule cAMP. May function as sensor that mediates responses to changes in cellular bicarbonate and CO(2) levels. Has a critical role in mammalian spermatogenesis by producing the cAMP which regulates cAMP-responsive nuclear factors indispensable for sperm maturation in the epididymis. Induces capacitation, the maturational process that sperm undergo prior to fertilization. Involved in ciliary beat regulation. This is Adenylate cyclase type 10 (Adcy10) from Rattus norvegicus (Rat).